The sequence spans 676 residues: Ribosome quality control complex subunit TCF25 (676 aa).

Disordered regions lie at residues 1-59 (MSRR…VRVN) and 85-147 (LTDA…ENGL). Residues 123 to 136 (GKLRKKKKKQKNKK) show a composition bias toward basic residues. A Phosphoserine modification is found at Ser-602.

The protein belongs to the TCF25 family. In terms of assembly, component of the ribosome quality control complex (RQC), composed of the E3 ubiquitin ligase LTN1, TCF25 and NEMF associated with the 60S ribosomal subunit. Interacts (via C-terminus) with NFATC4; the interaction leads to suppresson of NFATC4 transcription factor activity and is reduced following stimulation with angiotensin-2. Interacts with XIAP. In terms of tissue distribution, in the embryo, widely expressed with highest levels in brain. In the adult, highest expression is found in the heart. Repressed in cardiac tissue of patients with heart failure (at protein level). mRNA levels in the heart are unchanged in patients with heart failure.

The protein localises to the nucleus. Its subcellular location is the cytoplasm. The protein resides in the cytosol. In terms of biological role, component of the ribosome quality control complex (RQC), a ribosome-associated complex that mediates ubiquitination and extraction of incompletely synthesized nascent chains for proteasomal degradation. In the RQC complex, required to promote formation of 'Lys-48'-linked polyubiquitin chains during ubiquitination of incompletely synthesized proteins by LTN1. May negatively regulate the calcineurin-NFAT signaling cascade by suppressing the activity of transcription factor NFATC4. May play a role in cell death control. This is Ribosome quality control complex subunit TCF25 from Homo sapiens (Human).